A 211-amino-acid polypeptide reads, in one-letter code: Protein-lysine N-methyltransferase DDB_G0272708 (211 aa).

This sequence belongs to the class I-like SAM-binding methyltransferase superfamily. EFM5 family.

It is found in the cytoplasm. S-adenosyl-L-methionine-dependent protein-lysine N-methyltransferase that methylates elongation factor 1-alpha. The chain is Protein-lysine N-methyltransferase DDB_G0272708 from Dictyostelium discoideum (Social amoeba).